The primary structure comprises 208 residues: Small ribosomal subunit protein eS8 (208 aa).

The tract at residues 1–34 is disordered; it reads MGISRDHWHKRRATGGKRAPIRKKRKYELGRPAA. The segment covering 7–26 has biased composition (basic residues); that stretch reads HWHKRRATGGKRAPIRKKRK.

The protein belongs to the eukaryotic ribosomal protein eS8 family. Component of the small ribosomal subunit. Identified in a IGF2BP1-dependent mRNP granule complex containing untranslated mRNAs. Part of the small subunit (SSU) processome, composed of more than 70 proteins and the RNA chaperone small nucleolar RNA (snoRNA) U3.

Its subcellular location is the cytoplasm. The protein localises to the membrane. The protein resides in the nucleus. It is found in the nucleolus. Functionally, component of the small ribosomal subunit. The ribosome is a large ribonucleoprotein complex responsible for the synthesis of proteins in the cell. Part of the small subunit (SSU) processome, first precursor of the small eukaryotic ribosomal subunit. During the assembly of the SSU processome in the nucleolus, many ribosome biogenesis factors, an RNA chaperone and ribosomal proteins associate with the nascent pre-rRNA and work in concert to generate RNA folding, modifications, rearrangements and cleavage as well as targeted degradation of pre-ribosomal RNA by the RNA exosome. In Spodoptera frugiperda (Fall armyworm), this protein is Small ribosomal subunit protein eS8 (RpS8).